The following is a 162-amino-acid chain: Phosphopantetheine adenylyltransferase (162 aa).

Thr-14 serves as a coordination point for substrate. ATP is bound by residues 14 to 15 and His-22; that span reads TF. Positions 46, 78, and 92 each coordinate substrate. ATP is bound by residues 93–95, Glu-103, and 128–134; these read GLR and HSFISSS.

This sequence belongs to the bacterial CoaD family. Homohexamer. The cofactor is Mg(2+).

It is found in the cytoplasm. It catalyses the reaction (R)-4'-phosphopantetheine + ATP + H(+) = 3'-dephospho-CoA + diphosphate. It participates in cofactor biosynthesis; coenzyme A biosynthesis; CoA from (R)-pantothenate: step 4/5. In terms of biological role, reversibly transfers an adenylyl group from ATP to 4'-phosphopantetheine, yielding dephospho-CoA (dPCoA) and pyrophosphate. The polypeptide is Phosphopantetheine adenylyltransferase (Xylella fastidiosa (strain M23)).